A 701-amino-acid polypeptide reads, in one-letter code: CRS2-associated factor 1, chloroplastic (701 aa).

The N-terminal 77 residues, 1-77 (MATSHLTSRS…ENGEPAAGVR (77 aa)), are a transit peptide targeting the chloroplast. 2 consecutive CRM domains span residues 183-279 (EPLT…TRPI) and 301-397 (DGLT…LPPL). A CRS2 binding region spans residues 581–603 (GILLLFKQAIDSGMALVLNENEF).

As to quaternary structure, interacts with CRS2 and RNA. Part of large ribonucleo-protein complexes that include group IIB introns, CRS2 and CAF1.

The protein localises to the plastid. It is found in the chloroplast stroma. Functionally, required for the splicing of group IIB introns in chloroplasts. Forms splicing particles with CRS2. Interacts with RNA and confers intron specificity of the splicing particles. This Oryza sativa subsp. japonica (Rice) protein is CRS2-associated factor 1, chloroplastic.